A 416-amino-acid polypeptide reads, in one-letter code: Multifunctional CCA protein (416 aa).

Positions 8 and 11 each coordinate ATP. CTP is bound by residues Gly8 and Arg11. Mg(2+) contacts are provided by Asp21 and Asp23. Positions 91, 137, and 140 each coordinate ATP. Arg91, Arg137, and Arg140 together coordinate CTP. The region spanning 228–329 (TGVHTLMVLA…VKIFDKADFW (102 aa)) is the HD domain.

It belongs to the tRNA nucleotidyltransferase/poly(A) polymerase family. Bacterial CCA-adding enzyme type 1 subfamily. In terms of assembly, monomer. Can also form homodimers and oligomers. Mg(2+) serves as cofactor. Ni(2+) is required as a cofactor.

The enzyme catalyses a tRNA precursor + 2 CTP + ATP = a tRNA with a 3' CCA end + 3 diphosphate. It carries out the reaction a tRNA with a 3' CCA end + 2 CTP + ATP = a tRNA with a 3' CCACCA end + 3 diphosphate. Functionally, catalyzes the addition and repair of the essential 3'-terminal CCA sequence in tRNAs without using a nucleic acid template. Adds these three nucleotides in the order of C, C, and A to the tRNA nucleotide-73, using CTP and ATP as substrates and producing inorganic pyrophosphate. tRNA 3'-terminal CCA addition is required both for tRNA processing and repair. Also involved in tRNA surveillance by mediating tandem CCA addition to generate a CCACCA at the 3' terminus of unstable tRNAs. While stable tRNAs receive only 3'-terminal CCA, unstable tRNAs are marked with CCACCA and rapidly degraded. The polypeptide is Multifunctional CCA protein (Shewanella baltica (strain OS223)).